The chain runs to 369 residues: Phenylalanine--tRNA ligase alpha subunit (369 aa).

Mg(2+) is bound at residue Glu-269.

This sequence belongs to the class-II aminoacyl-tRNA synthetase family. Phe-tRNA synthetase alpha subunit type 1 subfamily. As to quaternary structure, tetramer of two alpha and two beta subunits. Mg(2+) is required as a cofactor.

It is found in the cytoplasm. The enzyme catalyses tRNA(Phe) + L-phenylalanine + ATP = L-phenylalanyl-tRNA(Phe) + AMP + diphosphate + H(+). This is Phenylalanine--tRNA ligase alpha subunit from Brucella ovis (strain ATCC 25840 / 63/290 / NCTC 10512).